Here is a 406-residue protein sequence, read N- to C-terminus: MSEREEFKFNTVEEAIEDIRQGKMVIVVDDPDRENEGDLVMAAEKVTPEAINFMAKYGRGLICLSLTPERCEQLDLHPMTPMNTDPKGTYFCVSIDAHPKHGTTTGISAYDRALTIKLAISPDAKPSDFVRPGHVFPLKARPGGVLERAGHTEASVDLARLAGLYPAGVICEIMKDDGTMARVPDLMEFAKKHNLKIITIADLIKYRLRRETLVEKVASAHLPTPWGVFKIHAYRHKLTGEEQVALTMGEWKEDEPVLVRVHSECLTGDVFRSFRCDCRPQLEKALEMIAKEGKGVLVYILGHEGRGIGIANKIKAYELQEKGYDTVEANEKLGYPPDLRDYGIGAQILRDLGVRKMKLMTNNPRKIVALEGFGLEVVERVPIKIEPNPYNKIYLQVKKDKLGHMF.

The DHBP synthase stretch occupies residues methionine 1 to arginine 209. D-ribulose 5-phosphate contacts are provided by residues arginine 33–glutamate 34, aspartate 38, arginine 148–threonine 152, and glutamate 172. Residue glutamate 34 participates in Mg(2+) binding. Histidine 151 is a Mg(2+) binding site. The tract at residues arginine 210–phenylalanine 406 is GTP cyclohydrolase II. Arginine 260 to glutamate 264 lines the GTP pocket. Positions 265, 276, and 278 each coordinate Zn(2+). Residues glutamine 281, glutamate 304–arginine 306, and threonine 326 contribute to the GTP site. Residue aspartate 338 is the Proton acceptor; for GTP cyclohydrolase activity of the active site. The Nucleophile; for GTP cyclohydrolase activity role is filled by arginine 340. Residues threonine 361 and lysine 366 each contribute to the GTP site.

This sequence in the N-terminal section; belongs to the DHBP synthase family. In the C-terminal section; belongs to the GTP cyclohydrolase II family. The cofactor is Mg(2+). It depends on Mn(2+) as a cofactor. Requires Zn(2+) as cofactor.

It catalyses the reaction D-ribulose 5-phosphate = (2S)-2-hydroxy-3-oxobutyl phosphate + formate + H(+). It carries out the reaction GTP + 4 H2O = 2,5-diamino-6-hydroxy-4-(5-phosphoribosylamino)-pyrimidine + formate + 2 phosphate + 3 H(+). Its pathway is cofactor biosynthesis; riboflavin biosynthesis; 2-hydroxy-3-oxobutyl phosphate from D-ribulose 5-phosphate: step 1/1. It functions in the pathway cofactor biosynthesis; riboflavin biosynthesis; 5-amino-6-(D-ribitylamino)uracil from GTP: step 1/4. In terms of biological role, catalyzes the conversion of D-ribulose 5-phosphate to formate and 3,4-dihydroxy-2-butanone 4-phosphate. Functionally, catalyzes the conversion of GTP to 2,5-diamino-6-ribosylamino-4(3H)-pyrimidinone 5'-phosphate (DARP), formate and pyrophosphate. This chain is Riboflavin biosynthesis protein RibBA, found in Aquifex aeolicus (strain VF5).